The primary structure comprises 177 residues: Gamma-crystallin M1-2 (177 aa).

2 Beta/gamma crystallin 'Greek key' domains span residues 2–40 (GKII…RVEN) and 41–83 (GCWM…RLLS). Positions 84–90 (QNLGIGT) are connecting peptide. 2 Beta/gamma crystallin 'Greek key' domains span residues 91 to 131 (NKLR…NVLD) and 132 to 174 (GYWI…RRVI).

It belongs to the beta/gamma-crystallin family. In terms of assembly, monomer.

Functionally, crystallins are the dominant structural components of the vertebrate eye lens. This is Gamma-crystallin M1-2 from Aquarana catesbeiana (American bullfrog).